A 493-amino-acid chain; its full sequence is Isoniazid-induced protein IniC (493 aa).

This Mycobacterium tuberculosis (strain CDC 1551 / Oshkosh) protein is Isoniazid-induced protein IniC (iniC).